The following is a 1098-amino-acid chain: Ubiquitin carboxyl-terminal hydrolase 36 (1098 aa).

The span at 72–86 shows a compositional bias: basic and acidic residues; the sequence is RHRSGDELQARKPGT. A disordered region spans residues 72–97; the sequence is RHRSGDELQARKPGTERVSGSGGDGV. The USP domain occupies 122-423; it reads AGLHNLGNTC…QAYVLFYLRI (302 aa). Catalysis depends on Cys131, which acts as the Nucleophile. His382 acts as the Proton acceptor in catalysis. 2 disordered regions span residues 428–464 and 483–574; these read KSPE…VPSP and EVGV…RDTI. 4 positions are modified to phosphoserine: Ser429, Ser463, Ser547, and Ser578. Residues 540–558 are compositionally biased toward low complexity; the sequence is PLQSLTTSPTTSQGSPGTG. The tract at residues 589–640 is disordered; sequence GHRLKGEGSGVDLEKGDSSSSSPEHSASSDPAKAPQTAESRAAHACDSQGTN. Residues 606-617 show a composition bias toward low complexity; the sequence is SSSSSPEHSASS. A Phosphoserine modification is found at Ser663. Disordered regions lie at residues 664–710 and 722–973; these read PALS…SPSA and HPVV…ALSV. The segment covering 665-677 has biased composition (polar residues); the sequence is ALSSTTTEPTSLM. A Phosphoserine modification is found at Ser678. Over residues 683–692 the composition is skewed to low complexity; sequence KKLALSAKKA. Ser709 carries the phosphoserine modification. Low complexity predominate over residues 746 to 763; that stretch reads HPHSASLSSSSAKPLGTS. A compositionally biased stretch (polar residues) spans 853–878; that stretch reads GQFQDQSWSSGSQKEEGTQPQVNGHQ. The segment covering 889–898 has biased composition (basic residues); the sequence is SSRKRRKRKR. Positions 901-917 are enriched in polar residues; it reads GLSQEATPSQDLIQHSC. Residues 921-932 show a composition bias toward basic and acidic residues; sequence DHSEPEARTELQ. Residues 933 to 943 are compositionally biased toward basic residues; it reads KKKKKKRRKRK. The span at 944–960 shows a compositional bias: basic and acidic residues; that stretch reads PEPQQDEESKHPGDQRS.

It belongs to the peptidase C19 family. As to quaternary structure, interacts with isoform 3 of FBXW7; the interaction inhibits MYC degradation induced by SCF(FBW7) complex. Interacts with NTRK1; USP36 does not deubiquitinate NTRK1. Interacts with NEDD4L (via domains WW1, 3 and 4); the interaction inhibits ubiquitination of, at least, NTRK1, KCNQ2 and KCNQ3 by NEDD4L. Interacts (via C-terminus) with EXOSC10 (via C-terminus); the interaction is facilitated by the association with RNA and promotes sumoylation of EXOSC10. In terms of processing, polyubiquitinated by NEDD4L, no effect on USP36 protein levels. Both proteins interact with and regulate each other's ubiquitination levels.

It is found in the nucleus. The protein resides in the nucleolus. It localises to the cytoplasm. It carries out the reaction Thiol-dependent hydrolysis of ester, thioester, amide, peptide and isopeptide bonds formed by the C-terminal Gly of ubiquitin (a 76-residue protein attached to proteins as an intracellular targeting signal).. Deubiquitinase essential for the regulation of nucleolar structure and function. Required for cell and organism viability. Plays an important role in ribosomal RNA processing and protein synthesis, which is mediated, at least in part, through deubiquitination of DHX33, NPM1 and FBL, regulating their protein stability. Functions as a transcriptional repressor by deubiquiting histone H2B at the promoters of genes critical for cellular differentiation, such as CDKN1A, thereby preventing histone H3 'Lys-4' trimethylation (H3K4). Specifically deubiquitinates MYC in the nucleolus, leading to prevent MYC degradation by the proteasome: acts by specifically interacting with isoform 3 of FBXW7 (FBW7gamma) in the nucleolus and counteracting ubiquitination of MYC by the SCF(FBW7) complex. In contrast, it does not interact with isoform 1 of FBXW7 (FBW7alpha) in the nucleoplasm. Interacts to and regulates the actions of E3 ubiquitin-protein ligase NEDD4L over substrates such as NTRK1, KCNQ2 and KCNQ3, affecting their expression an functions. Deubiquitinates SOD2, regulates SOD2 protein stability. Deubiquitinase activity is required to control selective autophagy activation by ubiquitinated proteins. Promotes CEP63 stabilization through 'Lys-48'-linked deubiquitination leading to increased stability. Acts as a SUMO ligase to promote EXOSC10 sumoylation critical for the nucleolar RNA exosome function in rRNA processing. Binds to pre-rRNAs. This Mus musculus (Mouse) protein is Ubiquitin carboxyl-terminal hydrolase 36 (Usp36).